Here is a 419-residue protein sequence, read N- to C-terminus: L-rhamnose isomerase (419 aa).

Mn(2+) is bound by residues His262, Asp294, and Asp296.

The protein belongs to the rhamnose isomerase family. In terms of assembly, homotetramer. Mn(2+) is required as a cofactor.

Its subcellular location is the cytoplasm. It carries out the reaction L-rhamnopyranose = L-rhamnulose. It functions in the pathway carbohydrate degradation; L-rhamnose degradation; glycerone phosphate from L-rhamnose: step 1/3. Its function is as follows. Catalyzes the interconversion of L-rhamnose and L-rhamnulose. The polypeptide is L-rhamnose isomerase (Salmonella gallinarum (strain 287/91 / NCTC 13346)).